Reading from the N-terminus, the 175-residue chain is MAATATACPAPPPPRSLYRGVALAAPGRRRAGYGASSSAARRWPGCRRRWAAHRIRTVSCAYSPRGAKTITACSWNEYVICSDIPVLIEFWASWCGPCRMVHRIVDEIAQEYAGRIKCYKLDTDDYPQVATSYSIERIPTVLLFKDGEKTHSITGTLPKAVYVRAIEKSISDSEQ.

The transit peptide at 1-59 directs the protein to the chloroplast; it reads MAATATACPAPPPPRSLYRGVALAAPGRRRAGYGASSSAARRWPGCRRRWAAHRIRTVS. The region spanning 61-171 is the Thioredoxin domain; it reads AYSPRGAKTI…YVRAIEKSIS (111 aa). Active-site nucleophile residues include Cys-95 and Cys-98. Cys-95 and Cys-98 are oxidised to a cystine.

The protein belongs to the thioredoxin family. Plant M-type subfamily.

It is found in the plastid. The protein localises to the chloroplast. Functionally, probable thiol-disulfide oxidoreductase that may be involved in the redox regulation of chloroplastic enzymes. The protein is Thioredoxin M3, chloroplastic of Oryza sativa subsp. japonica (Rice).